The primary structure comprises 767 residues: Photosystem I P700 chlorophyll a apoprotein A1 (767 aa).

Helical transmembrane passes span 72-95, 158-181, 197-221, 305-323, 364-387, 403-429, 451-473, and 548-566; these read IFSAHFGHLAVIFIWLSGAFFHGA, LMSLAIGALVMAGLMLNAGVFHYH, LNHHLAGLLGLGSLSWTGHLLHVSL, IAHHHLAIAVLFIVAGHMY, WHAQLGVNLAMLGSLSIIVAQHMY, IGLFTHHMWIGGFLIVGAAAHAAIAMI, AIISHLNWVCIWLGAHSFGLYVH, and FMVHHIHAFTIHVTVLILL. Residues cysteine 590 and cysteine 599 each coordinate [4Fe-4S] cluster. Helical transmembrane passes span 606–627 and 681–703; these read HVFLGLFWMYNSLSVVIFHFSW and TSAYGLMFLGAHFVWAFSLMFLF. Histidine 692 is a chlorophyll a' binding site. The chlorophyll a site is built by methionine 700 and tyrosine 708. Phylloquinone is bound at residue tryptophan 709. Residues 741-761 form a helical membrane-spanning segment; sequence AVGVAHYLLGGIATTWAFFHA.

This sequence belongs to the PsaA/PsaB family. The PsaA/B heterodimer binds the P700 chlorophyll special pair and subsequent electron acceptors. PSI consists of a core antenna complex that captures photons, and an electron transfer chain that converts photonic excitation into a charge separation. The cyanobacterial PSI reaction center is composed of one copy each of PsaA,B,C,D,E,F,I,J,K,L,M and X, and forms trimeric complexes. PSI electron transfer chain: 5 chlorophyll a, 1 chlorophyll a', 2 phylloquinones and 3 4Fe-4S clusters. PSI core antenna: 90 chlorophyll a, 22 carotenoids, 3 phospholipids and 1 galactolipid. P700 is a chlorophyll a/chlorophyll a' dimer, A0 is one or more chlorophyll a, A1 is one or both phylloquinones and FX is a shared 4Fe-4S iron-sulfur center. serves as cofactor.

Its subcellular location is the cellular thylakoid membrane. It carries out the reaction reduced [plastocyanin] + hnu + oxidized [2Fe-2S]-[ferredoxin] = oxidized [plastocyanin] + reduced [2Fe-2S]-[ferredoxin]. Its function is as follows. PsaA and PsaB bind P700, the primary electron donor of photosystem I (PSI), as well as the electron acceptors A0, A1 and FX. PSI is a plastocyanin/cytochrome c6-ferredoxin oxidoreductase, converting photonic excitation into a charge separation, which transfers an electron from the donor P700 chlorophyll pair to the spectroscopically characterized acceptors A0, A1, FX, FA and FB in turn. Oxidized P700 is reduced on the lumenal side of the thylakoid membrane by plastocyanin or cytochrome c6. In Synechococcus sp. (strain CC9311), this protein is Photosystem I P700 chlorophyll a apoprotein A1.